The sequence spans 1469 residues: Protein BCL9 homolog (1469 aa).

Polar residues predominate over residues 1–16 (MLSTTMPRSPTQQQPQ). Disordered regions lie at residues 1 to 131 (MLST…NVSA), 161 to 187 (SNKA…KEEP), 200 to 222 (EERE…NAQD), 422 to 442 (ENSK…QSDP), and 454 to 474 (GGSS…DSIS). Position 9 is a phosphoserine (serine 9). Threonine 11 carries the post-translational modification Phosphothreonine. Positions 17–34 (PNSDASSTSASGSNPGAA) are enriched in low complexity. 2 stretches are compositionally biased toward polar residues: residues 40-60 (SAAS…TLSP) and 90-113 (SGNN…NSCL). Over residues 116 to 130 (SPQNSSEHSNSSNVS) the composition is skewed to low complexity. The residue at position 206 (serine 206) is a Phosphoserine. Phosphothreonine is present on threonine 208. A Phosphoserine modification is found at serine 210. Polar residues-rich tracts occupy residues 422–438 (ENSK…SFVD) and 455–474 (GSSN…DSIS). An ARM-binding region spans residues 511–555 (SLQGVKVPDENLTPQQRQHREEQLAKIKKMNQFLFPENENSVGAN). 3 disordered regions span residues 728-830 (GGKP…TSTV), 844-913 (CFQA…RSPV), and 961-991 (QASA…PPPN). A compositionally biased stretch (low complexity) spans 731–745 (PRQVTGTVVPQQQTP). Residues 770-781 (IQRSASVPIATQ) show a composition bias toward polar residues. Positions 782 to 796 (SPNPSSPNNLSLPSP) are enriched in low complexity. Polar residues-rich tracts occupy residues 806 to 830 (PTNS…TSTV) and 844 to 880 (CFQA…TPLS). A phosphoserine mark is found at serine 883, serine 905, and serine 911. Polar residues predominate over residues 904-913 (PSPQGQRSPV).

The protein belongs to the BCL9 family. Binds to ARM and PYGO.

The protein localises to the nucleus. In terms of biological role, involved in signal transduction through the Wnt pathway. The polypeptide is Protein BCL9 homolog (lgs) (Drosophila melanogaster (Fruit fly)).